The following is a 746-amino-acid chain: Protein C-mannosyl-transferase DPY19L1 (746 aa).

The disordered stretch occupies residues 1–68; the sequence is MVLQARSKHR…RAETAAPAPD (68 aa). Residues 14–27 show a composition bias toward pro residues; the sequence is PRPPRPARSSPPPL. 12 helical membrane-spanning segments follow: residues 93–113, 139–159, 227–247, 248–268, 308–328, 329–349, 357–377, 378–398, 405–425, 481–501, 520–540, and 562–582; these read STLLLASFAALLHWSHITQLF, YSYFKTIVEAPSFLSGVWMIM, ACFYVAVIFMLNGLMMALFFI, YGTYLSGSRLGGLVTVLCFFF, YRGSLIALCISNVFFMLPWQF, AQFVLLTQIASLFAVYVVGYI, IIYTHMISLVLCFVLMFGNSM, LLTSYYASSLVIIWGMLAMKP, VSELSLWVIQGCCWLFGTVTL, LLLPVVLAIVAAIGRKIINDM, GELVYHALQLFAYTALGILIM, and LFGWLFGKVHPGAVVFAVLAA.

The protein belongs to the dpy-19 family.

The protein localises to the endoplasmic reticulum membrane. It carries out the reaction L-tryptophyl-[protein] + a di-trans,poly-cis-dolichyl beta-D-mannosyl phosphate = C-alpha-D-mannosyl-L-tryptophyl-[protein] + a di-trans,poly-cis-dolichyl phosphate + H(+). Its pathway is protein modification; protein glycosylation. In terms of biological role, C-mannosyltransferase that mediates the C-mannosylation tryptophan residues on target proteins. The reaction occurs on the luminal side of the endoplasmic reticulum and involves the transfer of a mannose unit from a dolichylphosphate mannose (Dol-P-Man) donor to an acceptor protein containing a WxxW consensus sequence. C-mannosylates the first two tryptophans in the WxxWxxWxxC sequence motif in thrombospondin (TSP) type-1 repeats of UNC5A. Regulates neurite extension during development. The chain is Protein C-mannosyl-transferase DPY19L1 (Dpy19l1) from Rattus norvegicus (Rat).